The chain runs to 730 residues: MARDPKHDILFEPIQIGPKTLRNRFYQVPHCIGAGSDKPGFQSAHRSVKAEGGWAALNTEYCSINPESDDTHRLSARIWDEGDVRNLKAMTDEVHKYGALAGVELWYGGAHAPNMESRATPRGPSQYASEFETLSYCKEMDLSDIAQVQQFYVDAAKRSRDAGFDIVYVYGAHSYLPLQFLNPYYNKRTDKYGGSLENRARFWLETLEKVKHAVGSDCAIATRFGVDTVYGPGQIEAEVDGQKFVEMADSLVDMWDITIGDIAEWGEDAGPSRFYQQGHTIPWVKLVKQVSKKPVLGVGRYTDPEKMIEIVTKGYADIIGCARPSIADPFLPQKVEQGRYDDIRVCIGCNVCISRWEIGGPPMICTQNATAGEEYRRGWHPEKFRQTKNKDSVLIVGAGPSGSEAARVLMESGYTVHLTDTAEKIGGHLNQVAALPGLGEWSYHRDYRETQITKLLKKNKESQLALGQKPMTADDVLQYGADKVIIATGARWNTDGTNCLTHDPIPGADASLPDQLTPEQVMDGKKKIGKRVVILNADTYFMAPSLAEKLATAGHEVTIVSGVHLANYMHFTLEYPNMMRRLHELHVEELGDHFCSRIEPGRMEIYNIWGDGSKRTYRGPGVSPRDANTSHRWIEFDSLVLVTGRHSECTLWNELKARESEWAENDIKGIYLIGDAEAPRLIADATFTGHRVAREIEEANPQIAIPYKRETIAWGTPHMPGGNFKIEYKV.

The FMN site is built by Pro-29, Cys-31, Tyr-61, and Glu-104. Residue Cys-31 is modified to S-6-FMN cysteine. Position 170–173 (Tyr-170–His-173) interacts with substrate. The active-site Proton donor is Tyr-175. FMN contacts are provided by Arg-223, Asp-268, Arg-300, Ala-322, and Arg-323. Residues Cys-346, Cys-349, Cys-352, and Cys-365 each coordinate [4Fe-4S] cluster. Positions 401, 420, 421, 428, 471, and 675 each coordinate ADP.

In the N-terminal section; belongs to the NADH:flavin oxidoreductase/NADH oxidase family. Homodimer. Forms a ternary complex with the heterodimeric electron transfer flavoprotein. Requires FMN as cofactor. [4Fe-4S] cluster serves as cofactor.

It catalyses the reaction trimethylamine + oxidized [electron-transfer flavoprotein] + H2O + H(+) = dimethylamine + reduced [electron-transfer flavoprotein] + formaldehyde. This chain is Trimethylamine dehydrogenase, found in Methylophilus methylotrophus (Bacterium W3A1).